Here is a 136-residue protein sequence, read N- to C-terminus: uncharacterized protein (136 aa).

The protein localises to the cytoplasm. The protein resides in the nucleus. This is an uncharacterized protein from Schizosaccharomyces pombe (strain 972 / ATCC 24843) (Fission yeast).